A 152-amino-acid polypeptide reads, in one-letter code: Biotin carboxyl carrier protein of acetyl-CoA carboxylase (152 aa).

One can recognise a Biotinyl-binding domain in the interval 72 to 148 (IIDILSPISG…TKNQVLMKII (77 aa)). Residue Lys114 is modified to N6-biotinyllysine.

The protein localises to the plastid. It is found in the chloroplast. Its pathway is lipid metabolism; fatty acid biosynthesis. In terms of biological role, this protein is a component of the acetyl coenzyme A carboxylase complex; first, biotin carboxylase catalyzes the carboxylation of the carrier protein and then the transcarboxylase transfers the carboxyl group to form malonyl-CoA. The chain is Biotin carboxyl carrier protein of acetyl-CoA carboxylase (accB) from Cyanidium caldarium (Red alga).